The sequence spans 616 residues: Dihydroxy-acid dehydratase (616 aa).

D81 lines the Mg(2+) pocket. A [2Fe-2S] cluster-binding site is contributed by C122. Mg(2+)-binding residues include D123 and K124. K124 is modified (N6-carboxylysine). C195 serves as a coordination point for [2Fe-2S] cluster. E491 is a binding site for Mg(2+). S517 serves as the catalytic Proton acceptor.

Belongs to the IlvD/Edd family. Homodimer. [2Fe-2S] cluster is required as a cofactor. Mg(2+) serves as cofactor.

It carries out the reaction (2R)-2,3-dihydroxy-3-methylbutanoate = 3-methyl-2-oxobutanoate + H2O. It catalyses the reaction (2R,3R)-2,3-dihydroxy-3-methylpentanoate = (S)-3-methyl-2-oxopentanoate + H2O. It participates in amino-acid biosynthesis; L-isoleucine biosynthesis; L-isoleucine from 2-oxobutanoate: step 3/4. It functions in the pathway amino-acid biosynthesis; L-valine biosynthesis; L-valine from pyruvate: step 3/4. Functions in the biosynthesis of branched-chain amino acids. Catalyzes the dehydration of (2R,3R)-2,3-dihydroxy-3-methylpentanoate (2,3-dihydroxy-3-methylvalerate) into 2-oxo-3-methylpentanoate (2-oxo-3-methylvalerate) and of (2R)-2,3-dihydroxy-3-methylbutanoate (2,3-dihydroxyisovalerate) into 2-oxo-3-methylbutanoate (2-oxoisovalerate), the penultimate precursor to L-isoleucine and L-valine, respectively. This Escherichia coli O7:K1 (strain IAI39 / ExPEC) protein is Dihydroxy-acid dehydratase.